A 115-amino-acid polypeptide reads, in one-letter code: Large ribosomal subunit protein bL20c (115 aa).

It belongs to the bacterial ribosomal protein bL20 family.

The protein localises to the plastid. It localises to the chloroplast. Binds directly to 23S ribosomal RNA and is necessary for the in vitro assembly process of the 50S ribosomal subunit. It is not involved in the protein synthesizing functions of that subunit. This chain is Large ribosomal subunit protein bL20c (rpl20), found in Mesostigma viride (Green alga).